The chain runs to 560 residues: Choline/ethanolamine transporter FLVCR1 (560 aa).

The interval 1 to 22 (MVKLNDEEGAAMAPGHQPTNGY) is disordered. Over 1–99 (MVKLNDEEGA…TPGTEGSPAP (99 aa)) the chain is Cytoplasmic. S56 bears the Phosphoserine mark. A disordered region spans residues 68–99 (QTPLAPEEETQTRLLPTGPGEETPGTEGSPAP). Low complexity predominate over residues 83-95 (PTGPGEETPGTEG). Residues 100 to 124 (QTALSARRFVVLLIFSLYSLVNAFQ) form a helical membrane-spanning segment. Residues 125–142 (WIQYSVISNVFEGFYGVS) lie on the Extracellular side of the membrane. Residues 143-170 (SLHIDWLSMVYMLAYVPLIFPATWLLDT) form a helical membrane-spanning segment. At 171–172 (RG) the chain is on the cytoplasmic side. Residues 173–192 (LRLTALLGSGLNCLGAWVKC) form a helical membrane-spanning segment. Residues 193–199 (ASVQQHL) lie on the Extracellular side of the membrane. A helical membrane pass occupies residues 200–228 (FWVTMLGQCLCSVAQVFILGLPSRIASVW). Residue Q214 participates in ethanolamine binding. The Cytoplasmic segment spans residues 229–233 (FGPKE). Residues 234–259 (VSTACATAVLGNQLGAAIGFLLPPVL) form a helical membrane-spanning segment. Topologically, residues 260 to 265 (VPNTQN) are extracellular. N265 is a glycosylation site (N-linked (GlcNAc...) asparagine). The chain crosses the membrane as a helical span at residues 266–295 (NTDLLACNISTMFYGTSSVATFLCFLTIIA). Residues 296–331 (FKEKPQYPPSQAQAALQNSPPAKYSYKKSIRNLFRN) are Cytoplasmic-facing. The helical transmembrane segment at 332–362 (VPFVLLLITYGIITGAFYSVSTLLNQMILTY) threads the bilayer. Topologically, residues 363 to 366 (YKGE) are extracellular. A helical transmembrane segment spans residues 367–395 (EVSAGKIGLTLVVAGMVGSILCGFWLDYT). At 396–397 (KI) the chain is on the cytoplasmic side. The helical transmembrane segment at 398-420 (YKQTTLIVYILSFLGMVIFTFTL) threads the bilayer. The Extracellular portion of the chain corresponds to 421–423 (DLG). The helical transmembrane segment at 424-453 (YGIVVFVTGGVLGFFMTGYLPLGFEFAVEI) threads the bilayer. Residues 454-461 (TYPESEGT) are Cytoplasmic-facing. A helical membrane pass occupies residues 462–487 (SSGLLNAAAQIFGILFTLAQGKLTTD). Q471 serves as a coordination point for ethanolamine. Q471 contacts choline. Over 488–489 (YS) the chain is Extracellular. Residues 490-512 (PKAGNIFLCVWLFLGIILTALIK) form a helical membrane-spanning segment. Residues 513-560 (SDLRRHNINIGIANGDIKAVPVEDTVEDSPTDKESKTIVMSKQSESAI) are Cytoplasmic-facing. A disordered region spans residues 537-560 (TVEDSPTDKESKTIVMSKQSESAI). S541 is modified (phosphoserine). Polar residues predominate over residues 550–560 (IVMSKQSESAI).

Belongs to the major facilitator superfamily. Feline leukemia virus subgroup C receptor (TC 2.A.1.28.1) family.

The protein resides in the cell membrane. The enzyme catalyses choline(out) = choline(in). It catalyses the reaction ethanolamine(in) = ethanolamine(out). The catalysed reaction is heme b(in) = heme b(out). Its function is as follows. Uniporter that mediates the transport of extracellular choline and ethanolamine into cells, thereby playing a key role in phospholipid biosynthesis. Choline and ethanolamine are the precursors of phosphatidylcholine and phosphatidylethanolamine, respectively, the two most abundant phospholipids. Transport is not coupled with proton transport and is exclusively driven by the choline (or ethanolamine) gradient across the plasma membrane. Also acts as a heme b transporter that mediates heme efflux from the cytoplasm to the extracellular compartment. (Microbial infection) Confers susceptibility to Feline leukemia virus subgroup C (FeLV-C) infection, which is associated with fatal erythroid aplasia, also known as aplastic anemia. In Felis catus (Cat), this protein is Choline/ethanolamine transporter FLVCR1 (FLVCR1).